Here is a 148-residue protein sequence, read N- to C-terminus: Cdc42 effector protein 5 (148 aa).

Disordered stretches follow at residues 1–89 (MPVL…DPLL) and 111–148 (RPEAAAAKPDAEPRPGTQPPQARCRPNADLELNDVIGL). The CRIB domain maps to 23-37 (ISAPLGDFRHTLHVG). Arg38 is modified (omega-N-methylarginine). Pro residues predominate over residues 55-76 (GPPPEPRAPPAGAPRSPPPPAV). Positions 77 to 87 (PQSAAPSPADP) are enriched in low complexity.

It belongs to the BORG/CEP family. As to quaternary structure, interacts with CDC42, in a GTP-dependent manner, and with SEPT7.

The protein localises to the endomembrane system. It localises to the cytoplasm. Its subcellular location is the cytoskeleton. In terms of biological role, probably involved in the organization of the actin cytoskeleton. May act downstream of CDC42 to induce actin filament assembly leading to cell shape changes. Induces pseudopodia formation in fibroblasts. Inhibits MAPK8 independently of CDC42 binding. Controls septin organization and this effect is negatively regulated by CDC42. The protein is Cdc42 effector protein 5 (CDC42EP5) of Homo sapiens (Human).